We begin with the raw amino-acid sequence, 309 residues long: GDP-6-deoxy-D-mannose reductase (309 aa).

Residues 11-12 (FV), Arg-32, 47-48 (DI), and 71-73 (AKS) each bind NADP(+). Position 114 to 115 (114 to 115 (SS)) interacts with substrate. Tyr-140 contacts NADP(+). Substrate contacts are provided by residues Asn-169, Asp-183, Arg-209, and 269 to 272 (RPSE).

This sequence belongs to the NAD(P)-dependent epimerase/dehydratase family. GDP-6-deoxy-D-mannose reductase subfamily.

The catalysed reaction is GDP-alpha-D-rhamnose + NAD(+) = GDP-4-dehydro-alpha-D-rhamnose + NADH + H(+). It catalyses the reaction GDP-alpha-D-rhamnose + NADP(+) = GDP-4-dehydro-alpha-D-rhamnose + NADPH + H(+). Reductase that catalyzes the conversion of GDP-6-deoxy-D-mannose to GDP-4-dehydro-6-deoxy-D-mannose (GDP-D-rhamnose). The sequence is that of GDP-6-deoxy-D-mannose reductase (rmd) from Aneurinibacillus thermoaerophilus.